We begin with the raw amino-acid sequence, 41 residues long: Photosystem II reaction center protein L (41 aa).

Residues 20 to 40 (SLYLGLLLVFVVGLLFSSYFL) traverse the membrane as a helical segment.

It belongs to the PsbL family. In terms of assembly, PSII is composed of 1 copy each of membrane proteins PsbA, PsbB, PsbC, PsbD, PsbE, PsbF, PsbH, PsbI, PsbJ, PsbK, PsbL, PsbM, PsbT, PsbX, PsbY, PsbZ, Psb30/Ycf12, peripheral proteins PsbO, CyanoQ (PsbQ), PsbU, PsbV and a large number of cofactors. It forms dimeric complexes.

The protein resides in the cellular thylakoid membrane. In terms of biological role, one of the components of the core complex of photosystem II (PSII). PSII is a light-driven water:plastoquinone oxidoreductase that uses light energy to abstract electrons from H(2)O, generating O(2) and a proton gradient subsequently used for ATP formation. It consists of a core antenna complex that captures photons, and an electron transfer chain that converts photonic excitation into a charge separation. This subunit is found at the monomer-monomer interface and is required for correct PSII assembly and/or dimerization. The sequence is that of Photosystem II reaction center protein L from Synechococcus sp. (strain JA-3-3Ab) (Cyanobacteria bacterium Yellowstone A-Prime).